The primary structure comprises 278 residues: Small ribosomal subunit protein uS2 (278 aa).

2 disordered regions span residues 216–235 and 250–278; these read EAAA…TQWD and NFAA…EWTN. The segment covering 256–278 has biased composition (low complexity); sequence ADGNWGATTGGDWAAAGGEEWTN.

It belongs to the universal ribosomal protein uS2 family. As to quaternary structure, component of the small ribosomal subunit. Mature ribosomes consist of a small (40S) and a large (60S) subunit. The 40S subunit contains about 33 different proteins and 1 molecule of RNA (18S). The 60S subunit contains about 49 different proteins and 3 molecules of RNA (25S, 5.8S and 5S). Interacts with ribosomal protein S21.

The protein resides in the cytoplasm. Functionally, required for the assembly and/or stability of the 40S ribosomal subunit. Required for the processing of the 20S rRNA-precursor to mature 18S rRNA in a late step of the maturation of 40S ribosomal subunits. The sequence is that of Small ribosomal subunit protein uS2 from Monosiga brevicollis (Choanoflagellate).